A 107-amino-acid polypeptide reads, in one-letter code: Iron-binding protein IscA (107 aa).

Fe cation-binding residues include Cys-35, Cys-99, and Cys-101.

It belongs to the HesB/IscA family. In terms of assembly, homodimer; may form tetramers and higher multimers. The cofactor is Fe cation.

In terms of biological role, is able to transfer iron-sulfur clusters to apo-ferredoxin. Multiple cycles of [2Fe2S] cluster formation and transfer are observed, suggesting that IscA acts catalytically. Recruits intracellular free iron so as to provide iron for the assembly of transient iron-sulfur cluster in IscU in the presence of IscS, L-cysteine and the thioredoxin reductase system TrxA/TrxB. The sequence is that of Iron-binding protein IscA from Klebsiella pneumoniae subsp. pneumoniae (strain ATCC 700721 / MGH 78578).